The chain runs to 1435 residues: Gag-Pol polyprotein (1435 aa).

Residue Gly2 is the site of N-myristoyl glycine; by host attachment. The interaction with Gp41 stretch occupies residues 7–31 (VLSGGELDRWEKIRLRPGGKKKYKL). The segment at 8–43 (LSGGELDRWEKIRLRPGGKKKYKLKHIVWASRELER) is interaction with host CALM1. The interval 12–19 (ELDRWEKI) is interaction with host AP3D1. The segment at 14–33 (DRWEKIRLRPGGKKKYKLKH) is interaction with membrane phosphatidylinositol 4,5-bisphosphate and RNA. Residues 16–22 (WEKIRLR) carry the Nuclear export signal motif. The Nuclear localization signal signature appears at 26 to 32 (KKKYKLK). The interval 73 to 77 (EELKS) is interaction with membrane phosphatidylinositol 4,5-bisphosphate. Positions 106–127 (EEQNKSKKKAQQAAADTGNSSQ) are disordered. Tyr132 carries the post-translational modification Phosphotyrosine; by host. The interaction with human PPIA/CYPA and NUP153 stretch occupies residues 189–227 (NTVGGHQAAMQMLKETINEEAAEWDRLHPVQAGPVAPGQ). The interval 277–363 (YSPSSILDIK…GGPGHKARVL (87 aa)) is dimerization/Multimerization of capsid protein p24. CCHC-type zinc fingers lie at residues 390–407 (VKCFNCGKEGHIAKNCRA) and 411–428 (KGCWKCGKEGHQMKDCTE). Positions 489–493 (PQITL) are dimerization of protease. One can recognise a Peptidase A2 domain in the interval 508–577 (KEALLDTGAD…TPVNIIGRNL (70 aa)). The active-site For protease activity; shared with dimeric partner is the Asp513. 2 dimerization of protease regions span residues 537–543 (GIGGFIK) and 576–588 (NLLTQIGCTLNFP). A Reverse transcriptase domain is found at 631–821 (EGKISKIGPE…PPFLWMGYEL (191 aa)). 3 residues coordinate Mg(2+): Asp697, Asp772, and Asp773. The interval 814–822 (FLWMGYELH) is RT 'primer grip'. The short motif at 985 to 1001 (WEAWWTDYWQATWIPEW) is the Tryptophan repeat motif element. The RNase H type-1 domain occupies 1021-1144 (IVGAETFYVD…VDKLVSAGIR (124 aa)). Mg(2+) contacts are provided by Asp1030, Glu1065, Asp1085, and Asp1136. The Integrase-type zinc finger occupies 1150–1191 (DGIDKAQEEHEKYHTNWRAMASDFNLPPVVAKEIVASCNKCQ). Residues His1159, His1163, Cys1187, and Cys1190 each contribute to the Zn(2+) site. Positions 1201–1351 (VDCSPGIWQL…SAGERIVDII (151 aa)) constitute an Integrase catalytic domain. Mg(2+) contacts are provided by Asp1211, Asp1263, and Glu1299. A DNA-binding region (integrase-type) is located at residues 1370 to 1417 (FRVYYRDSRDPLWKGPAKLLWKGEGAVVIQDNSDIKVVPRRKAKIIRD).

As to quaternary structure, homotrimer; further assembles as hexamers of trimers. Interacts with gp41 (via C-terminus). Interacts with host CALM1; this interaction induces a conformational change in the Matrix protein, triggering exposure of the myristate group. Interacts with host AP3D1; this interaction allows the polyprotein trafficking to multivesicular bodies during virus assembly. Part of the pre-integration complex (PIC) which is composed of viral genome, matrix protein, Vpr and integrase. In terms of assembly, homodimer; the homodimer further multimerizes as homohexamers or homopentamers. Interacts with human PPIA/CYPA; This interaction stabilizes the capsid. Interacts with human NUP153. Interacts with host PDZD8; this interaction stabilizes the capsid. Interacts with monkey TRIM5; this interaction destabilizes the capsid. Homodimer, whose active site consists of two apposed aspartic acid residues. As to quaternary structure, heterodimer of p66 RT and p51 RT (RT p66/p51). Heterodimerization of RT is essential for DNA polymerase activity. The overall folding of the subdomains is similar in p66 RT and p51 RT but the spatial arrangements of the subdomains are dramatically different. In terms of assembly, homotetramer; may further associate as a homohexadecamer. Part of the pre-integration complex (PIC) which is composed of viral genome, matrix protein, Vpr and integrase. Interacts with human SMARCB1/INI1 and human PSIP1/LEDGF isoform 1. Interacts with human KPNA3; this interaction might play a role in nuclear import of the pre-integration complex. Interacts with human NUP153; this interaction might play a role in nuclear import of the pre-integration complex. Mg(2+) serves as cofactor. In terms of processing, specific enzymatic cleavages by the viral protease yield mature proteins. The protease is released by autocatalytic cleavage. The polyprotein is cleaved during and after budding, this process is termed maturation. Proteolytic cleavage of p66 RT removes the RNase H domain to yield the p51 RT subunit. Nucleocapsid protein p7 might be further cleaved after virus entry. Post-translationally, tyrosine phosphorylated presumably in the virion by a host kinase. Phosphorylation is apparently not a major regulator of membrane association. Phosphorylated possibly by host MAPK1; this phosphorylation is necessary for Pin1-mediated virion uncoating. In terms of processing, methylated by host PRMT6, impairing its function by reducing RNA annealing and the initiation of reverse transcription.

It localises to the host cell membrane. Its subcellular location is the host endosome. The protein resides in the host multivesicular body. It is found in the virion membrane. The protein localises to the host nucleus. It localises to the host cytoplasm. Its subcellular location is the virion. It carries out the reaction Specific for a P1 residue that is hydrophobic, and P1' variable, but often Pro.. The enzyme catalyses Endohydrolysis of RNA in RNA/DNA hybrids. Three different cleavage modes: 1. sequence-specific internal cleavage of RNA. Human immunodeficiency virus type 1 and Moloney murine leukemia virus enzymes prefer to cleave the RNA strand one nucleotide away from the RNA-DNA junction. 2. RNA 5'-end directed cleavage 13-19 nucleotides from the RNA end. 3. DNA 3'-end directed cleavage 15-20 nucleotides away from the primer terminus.. It catalyses the reaction 3'-end directed exonucleolytic cleavage of viral RNA-DNA hybrid.. The catalysed reaction is DNA(n) + a 2'-deoxyribonucleoside 5'-triphosphate = DNA(n+1) + diphosphate. With respect to regulation, protease: The viral protease is inhibited by many synthetic protease inhibitors (PIs), such as amprenavir, atazanavir, indinavir, loprinavir, nelfinavir, ritonavir and saquinavir. Use of protease inhibitors in tritherapy regimens permit more ambitious therapeutic strategies. Reverse transcriptase/ribonuclease H: RT can be inhibited either by nucleoside RT inhibitors (NRTIs) or by non nucleoside RT inhibitors (NNRTIs). NRTIs act as chain terminators, whereas NNRTIs inhibit DNA polymerization by binding a small hydrophobic pocket near the RT active site and inducing an allosteric change in this region. Classical NRTIs are abacavir, adefovir (PMEA), didanosine (ddI), lamivudine (3TC), stavudine (d4T), tenofovir (PMPA), zalcitabine (ddC), and zidovudine (AZT). Classical NNRTIs are atevirdine (BHAP U-87201E), delavirdine, efavirenz (DMP-266), emivirine (I-EBU), and nevirapine (BI-RG-587). The tritherapies used as a basic effective treatment of AIDS associate two NRTIs and one NNRTI. Its function is as follows. Mediates, with Gag polyprotein, the essential events in virion assembly, including binding the plasma membrane, making the protein-protein interactions necessary to create spherical particles, recruiting the viral Env proteins, and packaging the genomic RNA via direct interactions with the RNA packaging sequence (Psi). Gag-Pol polyprotein may regulate its own translation, by the binding genomic RNA in the 5'-UTR. At low concentration, the polyprotein would promote translation, whereas at high concentration, the polyprotein would encapsidate genomic RNA and then shut off translation. Targets the polyprotein to the plasma membrane via a multipartite membrane-binding signal, that includes its myristoylated N-terminus. Matrix protein is part of the pre-integration complex. Implicated in the release from host cell mediated by Vpu. Binds to RNA. Functionally, forms the conical core that encapsulates the genomic RNA-nucleocapsid complex in the virion. Most core are conical, with only 7% tubular. The core is constituted by capsid protein hexamer subunits. The core is disassembled soon after virion entry. Host restriction factors such as TRIM5-alpha or TRIMCyp bind retroviral capsids and cause premature capsid disassembly, leading to blocks in reverse transcription. Capsid restriction by TRIM5 is one of the factors which restricts HIV-1 to the human species. Host PIN1 apparently facilitates the virion uncoating. On the other hand, interactions with PDZD8 or CYPA stabilize the capsid. In terms of biological role, encapsulates and protects viral dimeric unspliced genomic RNA (gRNA). Binds these RNAs through its zinc fingers. Acts as a nucleic acid chaperone which is involved in rearangement of nucleic acid secondary structure during gRNA retrotranscription. Also facilitates template switch leading to recombination. As part of the polyprotein, participates in gRNA dimerization, packaging, tRNA incorporation and virion assembly. Its function is as follows. Aspartyl protease that mediates proteolytic cleavages of Gag and Gag-Pol polyproteins during or shortly after the release of the virion from the plasma membrane. Cleavages take place as an ordered, step-wise cascade to yield mature proteins. This process is called maturation. Displays maximal activity during the budding process just prior to particle release from the cell. Also cleaves Nef and Vif, probably concomitantly with viral structural proteins on maturation of virus particles. Hydrolyzes host EIF4GI and PABP1 in order to shut off the capped cellular mRNA translation. The resulting inhibition of cellular protein synthesis serves to ensure maximal viral gene expression and to evade host immune response. Also mediates cleavage of host YTHDF3. Mediates cleavage of host CARD8, thereby activating the CARD8 inflammasome, leading to the clearance of latent HIV-1 in patient CD4(+) T-cells after viral reactivation; in contrast, HIV-1 can evade CARD8-sensing when its protease remains inactive in infected cells prior to viral budding. Multifunctional enzyme that converts the viral RNA genome into dsDNA in the cytoplasm, shortly after virus entry into the cell. This enzyme displays a DNA polymerase activity that can copy either DNA or RNA templates, and a ribonuclease H (RNase H) activity that cleaves the RNA strand of RNA-DNA heteroduplexes in a partially processive 3' to 5' endonucleasic mode. Conversion of viral genomic RNA into dsDNA requires many steps. A tRNA(3)-Lys binds to the primer-binding site (PBS) situated at the 5'-end of the viral RNA. RT uses the 3' end of the tRNA primer to perform a short round of RNA-dependent minus-strand DNA synthesis. The reading proceeds through the U5 region and ends after the repeated (R) region which is present at both ends of viral RNA. The portion of the RNA-DNA heteroduplex is digested by the RNase H, resulting in a ssDNA product attached to the tRNA primer. This ssDNA/tRNA hybridizes with the identical R region situated at the 3' end of viral RNA. This template exchange, known as minus-strand DNA strong stop transfer, can be either intra- or intermolecular. RT uses the 3' end of this newly synthesized short ssDNA to perform the RNA-dependent minus-strand DNA synthesis of the whole template. RNase H digests the RNA template except for two polypurine tracts (PPTs) situated at the 5'-end and near the center of the genome. It is not clear if both polymerase and RNase H activities are simultaneous. RNase H probably can proceed both in a polymerase-dependent (RNA cut into small fragments by the same RT performing DNA synthesis) and a polymerase-independent mode (cleavage of remaining RNA fragments by free RTs). Secondly, RT performs DNA-directed plus-strand DNA synthesis using the PPTs that have not been removed by RNase H as primers. PPTs and tRNA primers are then removed by RNase H. The 3' and 5' ssDNA PBS regions hybridize to form a circular dsDNA intermediate. Strand displacement synthesis by RT to the PBS and PPT ends produces a blunt ended, linear dsDNA copy of the viral genome that includes long terminal repeats (LTRs) at both ends. Functionally, catalyzes viral DNA integration into the host chromosome, by performing a series of DNA cutting and joining reactions. This enzyme activity takes place after virion entry into a cell and reverse transcription of the RNA genome in dsDNA. The first step in the integration process is 3' processing. This step requires a complex comprising the viral genome, matrix protein, Vpr and integrase. This complex is called the pre-integration complex (PIC). The integrase protein removes 2 nucleotides from each 3' end of the viral DNA, leaving recessed CA OH's at the 3' ends. In the second step, the PIC enters cell nucleus. This process is mediated through integrase and Vpr proteins, and allows the virus to infect a non dividing cell. This ability to enter the nucleus is specific of lentiviruses, other retroviruses cannot and rely on cell division to access cell chromosomes. In the third step, termed strand transfer, the integrase protein joins the previously processed 3' ends to the 5' ends of strands of target cellular DNA at the site of integration. The 5'-ends are produced by integrase-catalyzed staggered cuts, 5 bp apart. A Y-shaped, gapped, recombination intermediate results, with the 5'-ends of the viral DNA strands and the 3' ends of target DNA strands remaining unjoined, flanking a gap of 5 bp. The last step is viral DNA integration into host chromosome. This involves host DNA repair synthesis in which the 5 bp gaps between the unjoined strands are filled in and then ligated. Since this process occurs at both cuts flanking the HIV genome, a 5 bp duplication of host DNA is produced at the ends of HIV-1 integration. Alternatively, Integrase may catalyze the excision of viral DNA just after strand transfer, this is termed disintegration. The chain is Gag-Pol polyprotein (gag-pol) from Human immunodeficiency virus type 1 group M subtype B (strain 89.6) (HIV-1).